A 429-amino-acid chain; its full sequence is MSVNVNRSVSDQFYRYKMPRLIAKVEGKGNGIKTVIVNMVDVAKALNRPPTYPTKYFGCELGAQTQFDVKNDRYIVNGSHEANKLQDMLDGFIKKFVLCPECENPETDLHVNPKKQTIGNSCKACGYRGMLDTHHKLCTFILKNPPENSDIGTGKKEKEKKNRKGKDKENGSVSTSETPPPPPPNEISPPHAVEEEEDDDWGEDTTEEAQRRRMDEISDHAKGLTLSDDLERTVEERVNILFDFVKKKKEEGIIDSSDKDIVAEAERLDVKAMGPLVLTEVLFDEKIREQIKKYRRHFLRFCHNNKKAQRYLLHGLECVVAMHQAQLISKIPHILKEMYDADLLEEEVIISWSEKASKKYVSKELAKEIRVKAEPFIKWLKEAEEESSGGEEEDEDENIEVVYSKTASVPKVETVKSDNKDDDIDIDAI.

S10 is subject to Phosphoserine. 27–34 lines the GTP pocket; sequence GKGNGIKT. The disordered stretch occupies residues 143-216; that stretch reads KNPPENSDIG…EEAQRRRMDE (74 aa). The span at 153 to 170 shows a compositional bias: basic and acidic residues; the sequence is TGKKEKEKKNRKGKDKEN. A compositionally biased stretch (pro residues) spans 178–187; sequence TPPPPPPNEI. Positions 194–207 are enriched in acidic residues; that stretch reads EEEEDDDWGEDTTE. T225 is modified (phosphothreonine). Phosphoserine occurs at positions 227, 387, 388, and 408. The region spanning 231–390 is the W2 domain; sequence ERTVEERVNI…KEAEEESSGG (160 aa). Glycyl lysine isopeptide (Lys-Gly) (interchain with G-Cter in SUMO2) cross-links involve residues K411 and K416. S417 bears the Phosphoserine mark.

It belongs to the eIF-2-beta/eIF-5 family. In terms of assembly, component of the 43S pre-initiation complex (43S PIC), which is composed of the 40S ribosomal subunit, EIF1, eIF1A (EIF1AX), eIF3 complex, EIF5 and eIF2-GTP-initiator tRNA complex (eIF2 ternary complex). Interacts with eIF1A (EIF1AX) during scanning. Interacts through its C-terminal domain (CTD) with EIF1 or with eIF2-beta (EIF2S2) (mutually exclusive) through a common binding site. Interacts through its C-terminal domain (CTD) with the CTD of EIF5B. Interacts with FMR1 isoform 6; this interaction occurs in a RNA-dependent manner.

It localises to the cytoplasm. In terms of biological role, component of the 43S pre-initiation complex (43S PIC), which binds to the mRNA cap-proximal region, scans mRNA 5'-untranslated region, and locates the initiation codon. In this complex, acts as a GTPase-activating protein, by promoting GTP hydrolysis by eIF2G (EIF2S3). During scanning, interacts with both EIF1 (via its C-terminal domain (CTD)) and EIF1A (via its NTD). This interaction with EIF1A contributes to the maintenance of EIF1 within the open 43S PIC. When start codon is recognized, EIF5, via its NTD, induces eIF2G (EIF2S3) to hydrolyze the GTP. Start codon recognition also induces a conformational change of the PIC to a closed state. This change increases the affinity of EIF5-CTD for EIF2-beta (EIF2S2), which allows the release, by an indirect mechanism, of EIF1 from the PIC. Finally, EIF5 stabilizes the PIC in its closed conformation. In Rattus norvegicus (Rat), this protein is Eukaryotic translation initiation factor 5 (Eif5).